The primary structure comprises 142 residues: Large ribosomal subunit protein uL13 (142 aa).

Belongs to the universal ribosomal protein uL13 family. In terms of assembly, part of the 50S ribosomal subunit.

In terms of biological role, this protein is one of the early assembly proteins of the 50S ribosomal subunit, although it is not seen to bind rRNA by itself. It is important during the early stages of 50S assembly. The chain is Large ribosomal subunit protein uL13 from Pseudomonas putida (strain ATCC 700007 / DSM 6899 / JCM 31910 / BCRC 17059 / LMG 24140 / F1).